The following is a 190-amino-acid chain: Threonylcarbamoyl-AMP synthase (190 aa).

The region spanning 7–190 is the YrdC-like domain; sequence IGSIAAAVDL…ALTGELFRQG (184 aa).

Belongs to the SUA5 family. TsaC subfamily.

It localises to the cytoplasm. It carries out the reaction L-threonine + hydrogencarbonate + ATP = L-threonylcarbamoyladenylate + diphosphate + H2O. Required for the formation of a threonylcarbamoyl group on adenosine at position 37 (t(6)A37) in tRNAs that read codons beginning with adenine. Catalyzes the conversion of L-threonine, HCO(3)(-)/CO(2) and ATP to give threonylcarbamoyl-AMP (TC-AMP) as the acyladenylate intermediate, with the release of diphosphate. The sequence is that of Threonylcarbamoyl-AMP synthase from Salmonella typhimurium (strain LT2 / SGSC1412 / ATCC 700720).